We begin with the raw amino-acid sequence, 131 residues long: Small ribosomal subunit protein bS6 (131 aa).

The disordered stretch occupies residues Ala-99–Glu-131. Basic and acidic residues predominate over residues Lys-104–Phe-116. Over residues Thr-120–Glu-131 the composition is skewed to acidic residues.

It belongs to the bacterial ribosomal protein bS6 family.

Binds together with bS18 to 16S ribosomal RNA. The polypeptide is Small ribosomal subunit protein bS6 (Sodalis glossinidius (strain morsitans)).